We begin with the raw amino-acid sequence, 248 residues long: Ubiquinone biosynthesis O-methyltransferase (248 aa).

Arg41, Gly72, Asp93, and Met136 together coordinate S-adenosyl-L-methionine.

Belongs to the methyltransferase superfamily. UbiG/COQ3 family.

It catalyses the reaction a 3-demethylubiquinol + S-adenosyl-L-methionine = a ubiquinol + S-adenosyl-L-homocysteine + H(+). It carries out the reaction a 3-(all-trans-polyprenyl)benzene-1,2-diol + S-adenosyl-L-methionine = a 2-methoxy-6-(all-trans-polyprenyl)phenol + S-adenosyl-L-homocysteine + H(+). It participates in cofactor biosynthesis; ubiquinone biosynthesis. O-methyltransferase that catalyzes the 2 O-methylation steps in the ubiquinone biosynthetic pathway. This is Ubiquinone biosynthesis O-methyltransferase from Rhizobium rhizogenes (strain K84 / ATCC BAA-868) (Agrobacterium radiobacter).